Here is a 274-residue protein sequence, read N- to C-terminus: Bis(5'-nucleosyl)-tetraphosphatase, symmetrical (274 aa).

Belongs to the Ap4A hydrolase family.

It catalyses the reaction P(1),P(4)-bis(5'-adenosyl) tetraphosphate + H2O = 2 ADP + 2 H(+). In terms of biological role, hydrolyzes diadenosine 5',5'''-P1,P4-tetraphosphate to yield ADP. The polypeptide is Bis(5'-nucleosyl)-tetraphosphatase, symmetrical (Shewanella baltica (strain OS223)).